The primary structure comprises 290 residues: S-methyl-5'-thioadenosine phosphorylase 2 (290 aa).

Residues Ser-14, 57-58 (RH), and 90-91 (SA) each bind phosphate. Residue Met-185 coordinates substrate. Ser-186 lines the phosphate pocket. 209–211 (DYD) provides a ligand contact to substrate.

The protein belongs to the PNP/MTAP phosphorylase family. MTAP subfamily. Homotrimer.

Its subcellular location is the cytoplasm. It localises to the nucleus. It carries out the reaction S-methyl-5'-thioadenosine + phosphate = 5-(methylsulfanyl)-alpha-D-ribose 1-phosphate + adenine. It functions in the pathway amino-acid biosynthesis; L-methionine biosynthesis via salvage pathway; S-methyl-5-thio-alpha-D-ribose 1-phosphate from S-methyl-5'-thioadenosine (phosphorylase route): step 1/1. Catalyzes the reversible phosphorylation of S-methyl-5'-thioadenosine (MTA) to adenine and 5-methylthioribose-1-phosphate. Involved in the breakdown of MTA, a major by-product of polyamine biosynthesis. Responsible for the first step in the methionine salvage pathway after MTA has been generated from S-adenosylmethionine. Has broad substrate specificity with 6-aminopurine nucleosides as preferred substrates. The polypeptide is S-methyl-5'-thioadenosine phosphorylase 2 (Puccinia graminis f. sp. tritici (strain CRL 75-36-700-3 / race SCCL) (Black stem rust fungus)).